Consider the following 284-residue polypeptide: NAD kinase (284 aa).

D70 (proton acceptor) is an active-site residue. NAD(+) is bound by residues D70–G71, N139–E140, K167, D169, L177, T180–S185, and Q236.

Belongs to the NAD kinase family. Requires a divalent metal cation as cofactor.

The protein resides in the cytoplasm. It carries out the reaction NAD(+) + ATP = ADP + NADP(+) + H(+). Functionally, involved in the regulation of the intracellular balance of NAD and NADP, and is a key enzyme in the biosynthesis of NADP. Catalyzes specifically the phosphorylation on 2'-hydroxyl of the adenosine moiety of NAD to yield NADP. The chain is NAD kinase from Helicobacter pylori (strain ATCC 700392 / 26695) (Campylobacter pylori).